A 256-amino-acid chain; its full sequence is Geranylgeranylglyceryl phosphate synthase (256 aa).

The Mg(2+) site is built by Asp28 and Ser53. Residues 172-178 (YLEAGSG), 203-204 (GG), and 225-226 (GT) each bind sn-glycerol 1-phosphate.

Belongs to the GGGP/HepGP synthase family. Group II subfamily. The cofactor is Mg(2+).

The protein localises to the cytoplasm. The catalysed reaction is sn-glycerol 1-phosphate + (2E,6E,10E)-geranylgeranyl diphosphate = sn-3-O-(geranylgeranyl)glycerol 1-phosphate + diphosphate. Its pathway is membrane lipid metabolism; glycerophospholipid metabolism. Its function is as follows. Prenyltransferase that catalyzes the transfer of the geranylgeranyl moiety of geranylgeranyl diphosphate (GGPP) to the C3 hydroxyl of sn-glycerol-1-phosphate (G1P). This reaction is the first ether-bond-formation step in the biosynthesis of archaeal membrane lipids. The sequence is that of Geranylgeranylglyceryl phosphate synthase from Methanococcus maripaludis (strain C5 / ATCC BAA-1333).